We begin with the raw amino-acid sequence, 928 residues long: Type II inositol 3,4-bisphosphate 4-phosphatase (928 aa).

The span at 1 to 13 (MEIKEEGTSEEGQ) shows a compositional bias: basic and acidic residues. Disordered regions lie at residues 1–23 (MEIK…QAND), 481–516 (ILRK…HHSD), and 548–575 (SRND…LTSH). One can recognise a C2 domain in the interval 23 to 165 (DPEDIQFTSI…LKSKEQLLSL (143 aa)). Basic and acidic residues-rich tracts occupy residues 506–516 (RRQDSIPHHSD) and 548–563 (SRND…KDGD).

This sequence belongs to the inositol 3,4-bisphosphate 4-phosphatase family.

It catalyses the reaction a 1,2-diacyl-sn-glycero-3-phospho-(1D-myo-inositol-3,4-bisphosphate) + H2O = a 1,2-diacyl-sn-glycero-3-phospho-(1D-myo-inositol-3-phosphate) + phosphate. It carries out the reaction 1D-myo-inositol 3,4-bisphosphate + H2O = 1D-myo-inositol 3-phosphate + phosphate. The enzyme catalyses 1D-myo-inositol 1,3,4-trisphosphate + H2O = 1D-myo-inositol 1,3-bisphosphate + phosphate. Its pathway is signal transduction; phosphatidylinositol signaling pathway. With respect to regulation, strongly inhibited by inositol hexakisphosphate. Catalyzes the hydrolysis of the 4-position phosphate of phosphatidylinositol 3,4-bisphosphate, inositol 1,3,4-trisphosphate and inositol 3,4-bisphosphate. Plays a role in the late stages of macropinocytosis by dephosphorylating phosphatidylinositol 3,4-bisphosphate in membrane ruffles. The lipid phosphatase activity is critical for tumor suppressor function. Antagonizes the PI3K-AKT/PKB signaling pathway by dephosphorylating phosphoinositides and thereby modulating cell cycle progression and cell survival. The chain is Type II inositol 3,4-bisphosphate 4-phosphatase (Inpp4b) from Rattus norvegicus (Rat).